The sequence spans 458 residues: Probable plasmid replicative DNA helicase (458 aa).

In terms of domain architecture, SF4 helicase spans 194–458 (KIDYVDGLPT…GKFTIQKEAW (265 aa)). 225-232 (ARPAMGKT) contacts ATP.

Belongs to the helicase family. DnaB subfamily. As to quaternary structure, homohexamer.

The enzyme catalyses Couples ATP hydrolysis with the unwinding of duplex DNA at the replication fork by translocating in the 5'-3' direction. This creates two antiparallel DNA single strands (ssDNA). The leading ssDNA polymer is the template for DNA polymerase III holoenzyme which synthesizes a continuous strand.. The catalysed reaction is ATP + H2O = ADP + phosphate + H(+). Functionally, a replicative DNA helicase, it participates in initiation and elongation during DNA replication. Travels ahead of the DNA replisome, separating dsDNA into templates for DNA synthesis. A processive ATP-dependent 5'-3' DNA helicase it has DNA-dependent ATPase activity. The protein is Probable plasmid replicative DNA helicase of Chlamydia psittaci (Chlamydophila psittaci).